Here is a 2311-residue protein sequence, read N- to C-terminus: Protein Ycf2 (2311 aa).

1652–1659 (GSIGTGRS) is a binding site for ATP.

The protein belongs to the Ycf2 family.

The protein localises to the plastid. It localises to the chloroplast stroma. Its function is as follows. Probable ATPase of unknown function. Its presence in a non-photosynthetic plant (Epifagus virginiana) and experiments in tobacco indicate that it has an essential function which is probably not related to photosynthesis. This chain is Protein Ycf2, found in Lemna minor (Common duckweed).